Here is a 340-residue protein sequence, read N- to C-terminus: Putative UPF0607 protein ENSP00000332738 (340 aa).

A compositionally biased stretch (basic and acidic residues) spans 75–90; it reads VRAEEPKEATEVKDQV. 2 disordered regions span residues 75 to 130 and 215 to 281; these read VRAE…NPRP and GLLM…KLPC. Over residues 91 to 126 the composition is skewed to polar residues; the sequence is ETQGQEDNKTGPCSNGKAASTSRPLETQGNLTSSWY. Low complexity predominate over residues 228-241; the sequence is PAALRSSRSSPPRA. The segment covering 242 to 251 has biased composition (basic residues); sequence AGHRPRKRKL. Residues 254-266 show a composition bias toward low complexity; that stretch reads PPLQLQQTPPLQL.

Belongs to the UPF0607 family.

The polypeptide is Putative UPF0607 protein ENSP00000332738 (Homo sapiens (Human)).